A 174-amino-acid polypeptide reads, in one-letter code: Centrosomal protein 20 (174 aa).

Residues 1 to 104 (MATVTELKAV…AFEESKDNSI (104 aa)) form a necessary and sufficient for homooligomerization and localization to centrosomes and pericentriolar satellites region. The LisH domain occupies 49–81 (ENLLINELIREYLEFNKYKYTASVLIAESGQPV). The tract at residues 136–174 (TKHLSWKPSRRPDDDHVRKDTGPRTTTEELPAAAQAVSR) is disordered. A Phosphoserine modification is found at serine 144. Positions 145–157 (RRPDDDHVRKDTG) are enriched in basic and acidic residues.

This sequence belongs to the CEP43 family. Homooligomer; probably required for localization to centrosomes. Forms a complex with KIAA0753/OFIP and OFD1; within this complex may stabilize the interaction between OFD1 and KIAA0753/OFIP. Interacts with PCM1; this interaction may be mediated by KIAA0753/OFIP.

It is found in the cytoplasm. Its subcellular location is the cytoskeleton. The protein resides in the microtubule organizing center. The protein localises to the centrosome. It localises to the centriole. It is found in the cell projection. Its subcellular location is the cilium. The protein resides in the cilium basal body. The protein localises to the cytoplasmic granule. It localises to the centriolar satellite. Its function is as follows. Involved in the biogenesis of cilia. Required for the recruitment of PLK1 to centrosomes and S phase progression. This chain is Centrosomal protein 20, found in Mus musculus (Mouse).